Here is a 553-residue protein sequence, read N- to C-terminus: Putative ABC transporter ATP-binding protein BCE_3323 (553 aa).

2 ABC transporter domains span residues 7–245 (AEIN…FRPF) and 295–527 (LSAE…SINR). Residues 41-48 (GGSGSGKT) and 329-336 (GKNGTGKS) contribute to the ATP site.

This sequence belongs to the ABC transporter superfamily.

Its subcellular location is the cell membrane. In terms of biological role, probably part of an ABC transporter complex. Responsible for energy coupling to the transport system. The sequence is that of Putative ABC transporter ATP-binding protein BCE_3323 from Bacillus cereus (strain ATCC 10987 / NRS 248).